Here is a 723-residue protein sequence, read N- to C-terminus: Nucleolar protein 11 (723 aa).

At Lys346 the chain carries N6-methyllysine. A disordered region spans residues 549-572 (FGPEDGNCSEDSQQLNDKPADTAH).

Interacts with UTP4. Interacts with FBL/fibrillarin in a transcription-dependent manner. May associate with the proposed t-UTP subcomplex of the SSU processome containing at least UTP4, WDR43, HEATR1, UTP15, WDR75.

Its subcellular location is the nucleus. The protein localises to the nucleolus. Its function is as follows. Ribosome biogenesis factor. May be required for both optimal rDNA transcription and small subunit (SSU) pre-rRNA processing at sites A', A0, 1 and 2b. This Mus musculus (Mouse) protein is Nucleolar protein 11 (Nol11).